The chain runs to 334 residues: Glyceraldehyde-3-phosphate dehydrogenase (334 aa).

Residues 12 to 13 and G111 each bind NAD(+); that span reads TI. 140-142 is a D-glyceraldehyde 3-phosphate binding site; sequence SCN. Catalysis depends on C141, which acts as the Nucleophile. Position 167 (R167) interacts with NAD(+). Position 192–193 (192–193) interacts with D-glyceraldehyde 3-phosphate; the sequence is HG. Q298 serves as a coordination point for NAD(+).

Belongs to the glyceraldehyde-3-phosphate dehydrogenase family. In terms of assembly, homotetramer.

It is found in the encapsulin nanocompartment. It catalyses the reaction D-glyceraldehyde 3-phosphate + phosphate + NADP(+) = (2R)-3-phospho-glyceroyl phosphate + NADPH + H(+). It carries out the reaction D-glyceraldehyde 3-phosphate + phosphate + NAD(+) = (2R)-3-phospho-glyceroyl phosphate + NADH + H(+). It participates in carbohydrate degradation; glycolysis; pyruvate from D-glyceraldehyde 3-phosphate: step 1/5. In terms of biological role, possible cargo protein of a type 4B encapsulin nanocompartment. Active in the presence of NAD and NADP, prefers NADP. The protein is Glyceraldehyde-3-phosphate dehydrogenase (gap) of Pyrococcus furiosus (strain ATCC 43587 / DSM 3638 / JCM 8422 / Vc1).